We begin with the raw amino-acid sequence, 747 residues long: RNA polymerase II assembly factor rtp1 (747 aa).

HEAT repeat units follow at residues Asn-37–Val-75, Gln-103–Glu-141, Asp-320–Thr-358, Ser-381–Ser-418, Glu-459–Glu-485, Asn-486–Asp-523, and Ile-557–Asp-594.

The protein belongs to the Tango6 family. In terms of assembly, interacts with RNA polymerase II subunits. Interacts with nuclear pore complex subunits.

It localises to the cytoplasm. The protein resides in the nucleus. In terms of biological role, required for the cytoplasmic assembly and the nuclear import of RNA polymerase II. The polypeptide is RNA polymerase II assembly factor rtp1 (Schizosaccharomyces pombe (strain 972 / ATCC 24843) (Fission yeast)).